The sequence spans 382 residues: 1-deoxy-D-xylulose 5-phosphate reductoisomerase (382 aa).

Residues Thr-10, Gly-11, Ser-12, Ile-13, Gly-36, and Asn-122 each contribute to the NADPH site. Lys-123 lines the 1-deoxy-D-xylulose 5-phosphate pocket. Residue Glu-124 coordinates NADPH. Residue Asp-148 coordinates Mn(2+). Ser-149, Glu-150, Ser-174, and His-197 together coordinate 1-deoxy-D-xylulose 5-phosphate. Position 150 (Glu-150) interacts with Mn(2+). Position 203 (Gly-203) interacts with NADPH. 1-deoxy-D-xylulose 5-phosphate is bound by residues Ser-210, Asn-215, Lys-216, and Glu-219. A Mn(2+)-binding site is contributed by Glu-219.

It belongs to the DXR family. It depends on Mg(2+) as a cofactor. Mn(2+) is required as a cofactor.

It carries out the reaction 2-C-methyl-D-erythritol 4-phosphate + NADP(+) = 1-deoxy-D-xylulose 5-phosphate + NADPH + H(+). It participates in isoprenoid biosynthesis; isopentenyl diphosphate biosynthesis via DXP pathway; isopentenyl diphosphate from 1-deoxy-D-xylulose 5-phosphate: step 1/6. Its function is as follows. Catalyzes the NADPH-dependent rearrangement and reduction of 1-deoxy-D-xylulose-5-phosphate (DXP) to 2-C-methyl-D-erythritol 4-phosphate (MEP). The sequence is that of 1-deoxy-D-xylulose 5-phosphate reductoisomerase from Chlorobium limicola (strain DSM 245 / NBRC 103803 / 6330).